Here is a 475-residue protein sequence, read N- to C-terminus: Aspartate ammonia-lyase (475 aa).

The L-aspartate site is built by Thr-104, Ser-143, Thr-144, Asn-145, Thr-190, and His-191. The SS loop stretch occupies residues 320–329 (GSSIMPGKVN). Ser-321 (proton acceptor) is an active-site residue. Residues Ser-322 and Lys-327 each coordinate L-aspartate.

The protein belongs to the class-II fumarase/aspartase family. Aspartase subfamily. In terms of assembly, homotetramer.

The enzyme catalyses L-aspartate = fumarate + NH4(+). In terms of biological role, catalyzes the reversible conversion of L-aspartate to fumarate and ammonia. This Bacillus subtilis (strain 168) protein is Aspartate ammonia-lyase.